The following is a 276-amino-acid chain: 2-dehydro-3-deoxyphosphooctonate aldolase (276 aa).

It belongs to the KdsA family.

The protein localises to the cytoplasm. It catalyses the reaction D-arabinose 5-phosphate + phosphoenolpyruvate + H2O = 3-deoxy-alpha-D-manno-2-octulosonate-8-phosphate + phosphate. It functions in the pathway carbohydrate biosynthesis; 3-deoxy-D-manno-octulosonate biosynthesis; 3-deoxy-D-manno-octulosonate from D-ribulose 5-phosphate: step 2/3. The protein operates within bacterial outer membrane biogenesis; lipopolysaccharide biosynthesis. The protein is 2-dehydro-3-deoxyphosphooctonate aldolase of Helicobacter pylori (strain Shi470).